Consider the following 261-residue polypeptide: MILDEIIKRTKEDLKKRKSDYPAQWLGRSLAYNPYVPRDVASALSSSAKEPLRIIAEVKKASPSKGVIRENFEPIRIAKEYEDAGANAISVLTEPHWFKGDIEYITQIRRYTATPLLRKDFIVDEYQILEALVYGADFILLIAKALSSKELKGLLAYAHHLGLEVLVETHDAQDVKKAIFAGANIIGINHRNLDDFSMDMSLCERLIPLLPNGKIIVAESGLYEHEQLKELNRIGVDAFLIGEHFMRQEDIKTAVKNIKEG.

This sequence belongs to the TrpC family.

The catalysed reaction is 1-(2-carboxyphenylamino)-1-deoxy-D-ribulose 5-phosphate + H(+) = (1S,2R)-1-C-(indol-3-yl)glycerol 3-phosphate + CO2 + H2O. It participates in amino-acid biosynthesis; L-tryptophan biosynthesis; L-tryptophan from chorismate: step 4/5. In Campylobacter curvus (strain 525.92), this protein is Indole-3-glycerol phosphate synthase.